The following is a 177-amino-acid chain: Large ribosomal subunit protein uL6 (177 aa).

This sequence belongs to the universal ribosomal protein uL6 family. In terms of assembly, part of the 50S ribosomal subunit.

This protein binds to the 23S rRNA, and is important in its secondary structure. It is located near the subunit interface in the base of the L7/L12 stalk, and near the tRNA binding site of the peptidyltransferase center. This is Large ribosomal subunit protein uL6 from Chelativorans sp. (strain BNC1).